The following is a 226-amino-acid chain: V-type proton ATPase subunit E 1 (226 aa).

At alanine 2 the chain carries N-acetylalanine. Tyrosine 56 bears the Phosphotyrosine mark.

It belongs to the V-ATPase E subunit family. V-ATPase is a heteromultimeric enzyme made up of two complexes: the ATP-hydrolytic V1 complex and the proton translocation V0 complex. The V1 complex consists of three catalytic AB heterodimers that form a heterohexamer, three peripheral stalks each consisting of EG heterodimers, one central rotor including subunits D and F, and the regulatory subunits C and H. The proton translocation complex V0 consists of the proton transport subunit a, a ring of proteolipid subunits c9c'', rotary subunit d, subunits e and f, and the accessory subunits ATP6AP1/Ac45 and ATP6AP2/PRR. Interacts with RABL2/RABL2A; binds preferentially to GTP-bound RABL2. Interacts with ALDOC. Interacts with RAB11B. In terms of tissue distribution, expressed in brain (at protein level).

The protein resides in the apical cell membrane. Its subcellular location is the cytoplasmic vesicle. It localises to the secretory vesicle. The protein localises to the synaptic vesicle membrane. It is found in the clathrin-coated vesicle membrane. Subunit of the V1 complex of vacuolar(H+)-ATPase (V-ATPase), a multisubunit enzyme composed of a peripheral complex (V1) that hydrolyzes ATP and a membrane integral complex (V0) that translocates protons. V-ATPase is responsible for acidifying and maintaining the pH of intracellular compartments and in some cell types, is targeted to the plasma membrane, where it is responsible for acidifying the extracellular environment. In Rattus norvegicus (Rat), this protein is V-type proton ATPase subunit E 1 (Atp6v1e1).